The sequence spans 193 residues: Probable GTP-binding protein EngB (193 aa).

The region spanning 19–188 (SVKEVCFMGR…HKQIFELFKA (170 aa)) is the EngB-type G domain. GTP is bound by residues 27 to 34 (GRSNVGKS), 53 to 57 (GRTQL), 70 to 73 (DLPG), 136 to 139 (NKFD), and 167 to 169 (VSA). Mg(2+)-binding residues include S34 and T55.

Belongs to the TRAFAC class TrmE-Era-EngA-EngB-Septin-like GTPase superfamily. EngB GTPase family. The cofactor is Mg(2+).

Its function is as follows. Necessary for normal cell division and for the maintenance of normal septation. This Mycoplasma pneumoniae (strain ATCC 29342 / M129 / Subtype 1) (Mycoplasmoides pneumoniae) protein is Probable GTP-binding protein EngB.